The chain runs to 421 residues: Lipid II:glycine glycyltransferase (421 aa).

Belongs to the FemABX family. In terms of assembly, monomer.

Its subcellular location is the cytoplasm. It carries out the reaction beta-D-GlcNAc-(1-&gt;4)-Mur2Ac(oyl-L-Ala-D-isoglutaminyl-L-Lys-D-Ala-D-Ala)-di-trans,octa-cis-undecaprenyl diphosphate + glycyl-tRNA(Gly) = beta-D-GlcNAc-(1-&gt;4)-Mur2Ac(oyl-L-Ala-D-isoglutaminyl-L-Lys-(N(6)-Gly)-D-Ala-D-Ala)-di-trans,octa-cis-undecaprenyl diphosphate + tRNA(Gly) + H(+). Catalyzes the incorporation of the first glycine of the pentaglycine interpeptide bridge, which is characteristic of the S.aureus peptidoglycan. This glycine is added to the epsilon-amino group of the L-lysine of the membrane-bound lipid II intermediate (GlcNAc-(beta-1,4)-N-acetylmuramic acid(-L-Ala-D-iGln-L-Lys-D-Ala-D-Ala)-pyrophosphoryl-undecaprenol), using glycyl-tRNA(Gly) as donor, in a ribosome-independent mechanism. The protein is Lipid II:glycine glycyltransferase (femX) of Staphylococcus aureus (strain bovine RF122 / ET3-1).